Consider the following 156-residue polypeptide: V-type sodium ATPase subunit K (156 aa).

4 helical membrane passes run 11 to 31, 60 to 80, 89 to 109, and 132 to 152; these read GMVFAVLAMATATIFSGIGSA, LLPGTQGLYGFVIAFLIFINL, GLNFLGASLPIAFTGLFSGIA, and IIFAAMVETYAILGFVISFLL.

This sequence belongs to the V-ATPase proteolipid subunit family. The N-terminus is blocked.

The protein resides in the cell membrane. Functionally, involved in ATP-driven sodium extrusion. This chain is V-type sodium ATPase subunit K (ntpK), found in Enterococcus hirae (strain ATCC 9790 / DSM 20160 / JCM 8729 / LMG 6399 / NBRC 3181 / NCIMB 6459 / NCDO 1258 / NCTC 12367 / WDCM 00089 / R).